The sequence spans 1477 residues: Lysine-specific demethylase rbr-2 (1477 aa).

The disordered stretch occupies residues 1 to 37; that stretch reads MRARRQENSISTPSAPSTSTSPRKKASIGNSRSKNHG. Residues 9-21 are compositionally biased toward low complexity; sequence SISTPSAPSTSTS. The 42-residue stretch at 56–97 folds into the JmjN domain; sequence APIYYPTEEEFSDPIEYVAKIRHEAEKFGVVKIVPPANFKPP. The ARID domain occupies 121 to 218; that stretch reads VKEKHTFIDR…HIEPFNRNLK (98 aa). A disordered region spans residues 222 to 314; sequence MKNDDESDDE…KAEGDDDDDE (93 aa). The segment covering 246–259 has biased composition (basic and acidic residues); that stretch reads MRTEIEVPNDKTTE. Basic residues-rich tracts occupy residues 272-283 and 295-304; these read GRRRSKNKKASS and NSTRGRKNKK. A PHD-type 1 zinc finger spans residues 319–371; sequence QVFCVACNEGKDEDLLLLCDIDGCNNGRHTYCCDPVLDEVPEGEWRCPKCIES. Positions 468–634 constitute a JmjC domain; sequence QYASHAWNLN…KGRECVESYS (167 aa). 3 residues coordinate Fe cation: His514, Asp517, and His602. Residues 874–926 adopt a coiled-coil conformation; it reads IIDKLEKWMEQVEMWRNRAKDAIYREQEYSKEEIEKIIEEGDEYDIKLEEIDE. The PHD-type 2 zinc finger occupies 1203–1257; that stretch reads LEACSCLGFNKSDDSESTLTCIMCDSEFHVRCCEWSPFLEKLPEGCFLCVRCLRG. The segment at 1375-1404 is disordered; that stretch reads TAKRKRPSVSHKETSKKSRKRQSQASPSEY. The PHD-type 3 zinc finger occupies 1411–1466; it reads FKSCQARACLKPYGDSVNWVMCEAGCKNWFHVICLGFTLREINDMHEYRCSSCLDH.

Belongs to the JARID1 histone demethylase family. The cofactor is Fe(2+).

The protein localises to the nucleus. It catalyses the reaction N(6),N(6),N(6)-trimethyl-L-lysyl(4)-[histone H3] + 3 2-oxoglutarate + 3 O2 = L-lysyl(4)-[histone H3] + 3 formaldehyde + 3 succinate + 3 CO2. Histone demethylase that specifically demethylates 'Lys-4' of histone H3, thereby playing a central role in histone code. Does not demethylate histone H3 'Lys-9', H3 'Lys-27', H3 'Lys-36', H3 'Lys-79' or H4 'Lys-20'. Demethylates trimethylated and dimethylated but not monomethylated H3 'Lys-4'. Required for normal longevity of the soma in a germline-dependent manner. Implicated in the epigenetic inheritance of lifespan over several generations. Involved in larval development and vulva formation. The chain is Lysine-specific demethylase rbr-2 (rbr-2) from Caenorhabditis elegans.